The primary structure comprises 205 residues: Small ribosomal subunit protein uS4 (205 aa).

The tract at residues 19–45 is disordered; sequence IWGRPKSPVNRREYGPGQHGQRRKGKL. The 64-residue stretch at 94–157 folds into the S4 RNA-binding domain; that stretch reads SRLDAVVYRA…KQLAIVLEAV (64 aa).

The protein belongs to the universal ribosomal protein uS4 family. In terms of assembly, part of the 30S ribosomal subunit. Contacts protein S5. The interaction surface between S4 and S5 is involved in control of translational fidelity.

One of the primary rRNA binding proteins, it binds directly to 16S rRNA where it nucleates assembly of the body of the 30S subunit. Functionally, with S5 and S12 plays an important role in translational accuracy. This Brucella suis biovar 1 (strain 1330) protein is Small ribosomal subunit protein uS4.